A 526-amino-acid polypeptide reads, in one-letter code: Phosphoenolpyruvate carboxylase (526 aa).

Belongs to the PEPCase type 2 family. As to quaternary structure, homotetramer. It depends on Mg(2+) as a cofactor.

It catalyses the reaction oxaloacetate + phosphate = phosphoenolpyruvate + hydrogencarbonate. In terms of biological role, catalyzes the irreversible beta-carboxylation of phosphoenolpyruvate (PEP) to form oxaloacetate (OAA), a four-carbon dicarboxylic acid source for the tricarboxylic acid cycle. The sequence is that of Phosphoenolpyruvate carboxylase from Methanosarcina acetivorans (strain ATCC 35395 / DSM 2834 / JCM 12185 / C2A).